Reading from the N-terminus, the 202-residue chain is Crossover junction endodeoxyribonuclease RuvC (202 aa).

Active-site residues include D7, E68, and D141. Residues D7, E68, and D141 each contribute to the Mg(2+) site.

Belongs to the RuvC family. As to quaternary structure, homodimer which binds Holliday junction (HJ) DNA. The HJ becomes 2-fold symmetrical on binding to RuvC with unstacked arms; it has a different conformation from HJ DNA in complex with RuvA. In the full resolvosome a probable DNA-RuvA(4)-RuvB(12)-RuvC(2) complex forms which resolves the HJ. Mg(2+) is required as a cofactor.

Its subcellular location is the cytoplasm. The enzyme catalyses Endonucleolytic cleavage at a junction such as a reciprocal single-stranded crossover between two homologous DNA duplexes (Holliday junction).. Functionally, the RuvA-RuvB-RuvC complex processes Holliday junction (HJ) DNA during genetic recombination and DNA repair. Endonuclease that resolves HJ intermediates. Cleaves cruciform DNA by making single-stranded nicks across the HJ at symmetrical positions within the homologous arms, yielding a 5'-phosphate and a 3'-hydroxyl group; requires a central core of homology in the junction. The consensus cleavage sequence is 5'-(A/T)TT(C/G)-3'. Cleavage occurs on the 3'-side of the TT dinucleotide at the point of strand exchange. HJ branch migration catalyzed by RuvA-RuvB allows RuvC to scan DNA until it finds its consensus sequence, where it cleaves and resolves the cruciform DNA. This chain is Crossover junction endodeoxyribonuclease RuvC, found in Clavibacter michiganensis subsp. michiganensis (strain NCPPB 382).